We begin with the raw amino-acid sequence, 328 residues long: DNA-directed RNA polymerase subunit alpha 1 (328 aa).

Residues 1 to 234 form an alpha N-terminal domain (alpha-NTD) region; sequence MQGFVKDFLK…GQLDEFVDER (234 aa). The interval 248 to 328 is alpha C-terminal domain (alpha-CTD); it reads FDPILLRPVN…NWPPASLIED (81 aa).

The protein belongs to the RNA polymerase alpha chain family. Homodimer. The RNAP catalytic core consists of 2 alpha, 1 beta, 1 beta' and 1 omega subunit. When a sigma factor is associated with the core the holoenzyme is formed, which can initiate transcription.

It catalyses the reaction RNA(n) + a ribonucleoside 5'-triphosphate = RNA(n+1) + diphosphate. DNA-dependent RNA polymerase catalyzes the transcription of DNA into RNA using the four ribonucleoside triphosphates as substrates. The sequence is that of DNA-directed RNA polymerase subunit alpha 1 from Psychromonas ingrahamii (strain DSM 17664 / CCUG 51855 / 37).